Here is a 296-residue protein sequence, read N- to C-terminus: MKGNIYSLFVLIAAFFWGTTGTVQALAPESATPLAFGAFRLLIGGSAMLLAVWISRELHVKNWAWPLVFLAAVCMACYQPLFFTAVKETGIAVGTVIAIGSAPIIAGTLEWAVLKKRPRNSWWIATVLALAGCWLLFSDSSNVRIDVAGVLMALGAGASFAGYTLISKAMMKTQPPRATSAVVFMISAILLTPLLWQLDISWILTPRGLGTSLYIGLIATCAAYFLFAKGLTGVPASAAVTLSLAEPLTASLLGVFFIGEMLSPSSWLGIALMMLGLLVISAAPRKQKTAEAAHMS.

The next 10 membrane-spanning stretches (helical) occupy residues 8–28 (LFVL…ALAP), 34–54 (LAFG…AVWI), 63–83 (WAWP…PLFF), 89–109 (TGIA…AGTL), 121–141 (SWWI…SDSS), 147–167 (VAGV…TLIS), 183–203 (VFMI…ISWI), 208–228 (GLGT…FLFA), 238–258 (AAVT…VFFI), and 261–281 (MLSP…LVIS). EamA domains follow at residues 15–138 (FFWG…LLFS) and 158–282 (ASFA…VISA).

It belongs to the EamA transporter family.

It localises to the cell membrane. This is an uncharacterized protein from Bacillus subtilis (strain 168).